Here is an 80-residue protein sequence, read N- to C-terminus: U-poneritoxin(01)-Om3a (80 aa).

The first 25 residues, 1–25, serve as a signal peptide directing secretion; the sequence is MKPSGLALAFLVVFMMAIMYNSVQA. Residues 26–39 constitute a propeptide that is removed on maturation; that stretch reads AAIADADAEAEAIA.

This sequence belongs to the formicidae venom precursor-01 superfamily. Post-translationally, truncated sequences of this peptide have also been found in the venom. It is possible they have been cleaved in the venom. In terms of tissue distribution, expressed by the venom gland.

The protein resides in the secreted. Its function is as follows. Cationic amphipathic alpha-helical peptide with antimicrobial activities against E.coli (MIC=3.1 uM), S.aureus (MIC=25 uM), and S.cerevisiae (MIC=50 uM). Also shows histamine-releasing activity (37.5% at 10 uM). Does not show hemolytic activity, even at 50 uM. This Odontomachus monticola (Trap-jaw ant) protein is U-poneritoxin(01)-Om3a.